The primary structure comprises 654 residues: MSTLLQHAQIDWDDQGRPHSRQYDDVYFAVNEGIEETKHVFLGQTRLAERFANLAPHTCGVIGETGFGTGMNFFCAWQLFDQHAHRDARLHFVSVEKYPLGHADMARAVSLWPELAAYTEPLLEQYVAVHPGFQQFTFANGRVTLTLLIGDVLEQLPQLDAQIDVWFLDGFAPAKNPDMWTPELFAQLARLSHPGTVLGTFTTTGWVRRSLVEAGFAMKKVPGIGKKWEVMSGAYVGPVPGPKAPWYARPAVAQGPREALVIGAGLAGSTTAASLARRGWQVTVLERHEAPAQEASGNPQGVLYLKLSAHGTALSQMILSGFGYTRRQLQRLQRGQDWDACGVLQLAFDAKEAERQGKLAAAFDHDLLHALERAEAEAIAGVALPAGGLFYPEGGWVHPPALCQQQLQHPGIRLLTHQDVIELRNIGQHWQAWAGDRLLASAPVVVLAGAADVRRFEPCAQLPLKRIRGQITRLPATASSRALRTVVCAEGYVAPPRGDEHTLGASFDFHSEDLAPTVAEHQGNLALLDEISVDLAQRLGVAELDAEQLQGRAAFRCTSPDYLPIVGPLADSQAFAEAYAVLGRDARQVPDVACPWLGGLYVNSGHGSRGLITAPLSGELVAAWVCGEPLPLPRAVAEACHPNRFALRRLIRGK.

Positions 1–236 are tRNA (mnm(5)s(2)U34)-methyltransferase; that stretch reads MSTLLQHAQI…KWEVMSGAYV (236 aa). The tract at residues 262-654 is FAD-dependent cmnm(5)s(2)U34 oxidoreductase; sequence IGAGLAGSTT…FALRRLIRGK (393 aa).

In the N-terminal section; belongs to the methyltransferase superfamily. tRNA (mnm(5)s(2)U34)-methyltransferase family. The protein in the C-terminal section; belongs to the DAO family. It depends on FAD as a cofactor.

The protein resides in the cytoplasm. The catalysed reaction is 5-aminomethyl-2-thiouridine(34) in tRNA + S-adenosyl-L-methionine = 5-methylaminomethyl-2-thiouridine(34) in tRNA + S-adenosyl-L-homocysteine + H(+). Functionally, catalyzes the last two steps in the biosynthesis of 5-methylaminomethyl-2-thiouridine (mnm(5)s(2)U) at the wobble position (U34) in tRNA. Catalyzes the FAD-dependent demodification of cmnm(5)s(2)U34 to nm(5)s(2)U34, followed by the transfer of a methyl group from S-adenosyl-L-methionine to nm(5)s(2)U34, to form mnm(5)s(2)U34. This is tRNA 5-methylaminomethyl-2-thiouridine biosynthesis bifunctional protein MnmC from Pseudomonas putida (strain GB-1).